The chain runs to 955 residues: 2-oxoglutarate dehydrogenase E1 component (955 aa).

It belongs to the alpha-ketoglutarate dehydrogenase family. Homodimer. Part of the 2-oxoglutarate dehydrogenase (OGDH) complex composed of E1 (2-oxoglutarate dehydrogenase), E2 (dihydrolipoamide succinyltransferase) and E3 (dihydrolipoamide dehydrogenase); the complex contains multiple copies of the three enzymatic components (E1, E2 and E3). Thiamine diphosphate is required as a cofactor.

The enzyme catalyses N(6)-[(R)-lipoyl]-L-lysyl-[protein] + 2-oxoglutarate + H(+) = N(6)-[(R)-S(8)-succinyldihydrolipoyl]-L-lysyl-[protein] + CO2. Its function is as follows. E1 component of the 2-oxoglutarate dehydrogenase (OGDH) complex which catalyzes the decarboxylation of 2-oxoglutarate, the first step in the conversion of 2-oxoglutarate to succinyl-CoA and CO(2). The sequence is that of 2-oxoglutarate dehydrogenase E1 component from Bacillus cereus (strain 03BB102).